The following is a 550-amino-acid chain: Glucose-6-phosphate isomerase (550 aa).

Glu-356 functions as the Proton donor in the catalytic mechanism. Residues His-387 and Lys-515 contribute to the active site.

This sequence belongs to the GPI family.

It localises to the cytoplasm. The enzyme catalyses alpha-D-glucose 6-phosphate = beta-D-fructose 6-phosphate. It functions in the pathway carbohydrate biosynthesis; gluconeogenesis. The protein operates within carbohydrate degradation; glycolysis; D-glyceraldehyde 3-phosphate and glycerone phosphate from D-glucose: step 2/4. In terms of biological role, catalyzes the reversible isomerization of glucose-6-phosphate to fructose-6-phosphate. This Photobacterium profundum (strain SS9) protein is Glucose-6-phosphate isomerase.